We begin with the raw amino-acid sequence, 149 residues long: D-aminoacyl-tRNA deacylase (149 aa).

The Gly-cisPro motif, important for rejection of L-amino acids signature appears at 137-138 (GP).

Belongs to the DTD family. In terms of assembly, homodimer.

The protein localises to the cytoplasm. It catalyses the reaction glycyl-tRNA(Ala) + H2O = tRNA(Ala) + glycine + H(+). It carries out the reaction a D-aminoacyl-tRNA + H2O = a tRNA + a D-alpha-amino acid + H(+). An aminoacyl-tRNA editing enzyme that deacylates mischarged D-aminoacyl-tRNAs. Also deacylates mischarged glycyl-tRNA(Ala), protecting cells against glycine mischarging by AlaRS. Acts via tRNA-based rather than protein-based catalysis; rejects L-amino acids rather than detecting D-amino acids in the active site. By recycling D-aminoacyl-tRNA to D-amino acids and free tRNA molecules, this enzyme counteracts the toxicity associated with the formation of D-aminoacyl-tRNA entities in vivo and helps enforce protein L-homochirality. The polypeptide is D-aminoacyl-tRNA deacylase (Clostridium kluyveri (strain ATCC 8527 / DSM 555 / NBRC 12016 / NCIMB 10680 / K1)).